A 453-amino-acid chain; its full sequence is Bifunctional protein GlmU (453 aa).

Residues 1-226 (MKFSAVILAA…AIEVEGVNDR (226 aa)) form a pyrophosphorylase region. Residues 8-11 (LAAG), Lys22, Gln73, 78-79 (GT), 100-102 (YGD), Gly137, Glu151, Asn166, and Asn224 each bind UDP-N-acetyl-alpha-D-glucosamine. A Mg(2+)-binding site is contributed by Asp102. Residue Asn224 coordinates Mg(2+). The interval 227–247 (AQLARLERAFQSMQAQKLLEQ) is linker. Residues 248 to 453 (GVMLRDPARF…TGWQRPVKQK (206 aa)) form an N-acetyltransferase region. UDP-N-acetyl-alpha-D-glucosamine-binding residues include Arg330 and Lys348. His360 serves as the catalytic Proton acceptor. UDP-N-acetyl-alpha-D-glucosamine contacts are provided by Tyr363 and Asn374. Residues Ala377, 383–384 (NY), Ser402, Ala420, and Arg437 contribute to the acetyl-CoA site.

This sequence in the N-terminal section; belongs to the N-acetylglucosamine-1-phosphate uridyltransferase family. In the C-terminal section; belongs to the transferase hexapeptide repeat family. As to quaternary structure, homotrimer. It depends on Mg(2+) as a cofactor.

The protein localises to the cytoplasm. The catalysed reaction is alpha-D-glucosamine 1-phosphate + acetyl-CoA = N-acetyl-alpha-D-glucosamine 1-phosphate + CoA + H(+). It carries out the reaction N-acetyl-alpha-D-glucosamine 1-phosphate + UTP + H(+) = UDP-N-acetyl-alpha-D-glucosamine + diphosphate. The protein operates within nucleotide-sugar biosynthesis; UDP-N-acetyl-alpha-D-glucosamine biosynthesis; N-acetyl-alpha-D-glucosamine 1-phosphate from alpha-D-glucosamine 6-phosphate (route II): step 2/2. It functions in the pathway nucleotide-sugar biosynthesis; UDP-N-acetyl-alpha-D-glucosamine biosynthesis; UDP-N-acetyl-alpha-D-glucosamine from N-acetyl-alpha-D-glucosamine 1-phosphate: step 1/1. Its pathway is bacterial outer membrane biogenesis; LPS lipid A biosynthesis. Its function is as follows. Catalyzes the last two sequential reactions in the de novo biosynthetic pathway for UDP-N-acetylglucosamine (UDP-GlcNAc). The C-terminal domain catalyzes the transfer of acetyl group from acetyl coenzyme A to glucosamine-1-phosphate (GlcN-1-P) to produce N-acetylglucosamine-1-phosphate (GlcNAc-1-P), which is converted into UDP-GlcNAc by the transfer of uridine 5-monophosphate (from uridine 5-triphosphate), a reaction catalyzed by the N-terminal domain. The protein is Bifunctional protein GlmU of Vibrio parahaemolyticus serotype O3:K6 (strain RIMD 2210633).